Consider the following 251-residue polypeptide: uncharacterized protein (251 aa).

The N-terminal stretch at 1 to 18 (MRILIILSIILCSLFARA) is a signal peptide.

This sequence belongs to the MlaA family.

This is an uncharacterized protein from Rickettsia felis (strain ATCC VR-1525 / URRWXCal2) (Rickettsia azadi).